The chain runs to 168 residues: Probable deoxyuridine 5'-triphosphate nucleotidohydrolase (168 aa).

This sequence belongs to the dCTP deaminase family. Archaeal dUTPase subfamily.

The enzyme catalyses dUTP + H2O = dUMP + diphosphate + H(+). The protein operates within pyrimidine metabolism; dUMP biosynthesis; dUMP from dCTP (dUTP route): step 2/2. In terms of biological role, this enzyme is involved in nucleotide metabolism: it produces dUMP, the immediate precursor of thymidine nucleotides and it decreases the intracellular concentration of dUTP so that uracil cannot be incorporated into DNA. This Archaeoglobus fulgidus (strain ATCC 49558 / DSM 4304 / JCM 9628 / NBRC 100126 / VC-16) protein is Probable deoxyuridine 5'-triphosphate nucleotidohydrolase.